The chain runs to 89 residues: DNA-directed RNA polymerase subunit omega (89 aa).

The protein belongs to the RNA polymerase subunit omega family. As to quaternary structure, the RNAP catalytic core consists of 2 alpha, 1 beta, 1 beta' and 1 omega subunit. When a sigma factor is associated with the core the holoenzyme is formed, which can initiate transcription.

The catalysed reaction is RNA(n) + a ribonucleoside 5'-triphosphate = RNA(n+1) + diphosphate. Its function is as follows. Promotes RNA polymerase assembly. Latches the N- and C-terminal regions of the beta' subunit thereby facilitating its interaction with the beta and alpha subunits. The chain is DNA-directed RNA polymerase subunit omega from Clavibacter michiganensis subsp. michiganensis (strain NCPPB 382).